A 443-amino-acid polypeptide reads, in one-letter code: Protein king tubby (443 aa).

2 disordered regions span residues 57–85 (TNGS…LSTI) and 98–189 (HELE…ESEG). Residues 68–85 (AVNTSRNHSNNMRSLSTI) show a composition bias toward polar residues. The span at 113–128 (QHQQSASHSANSTQSQ) shows a compositional bias: low complexity. A Phosphoserine modification is found at serine 136. Residues 148–160 (NRNVAAAAPVRPA) show a composition bias toward low complexity. The span at 177 to 186 (NGTGNGTGGE) shows a compositional bias: gly residues.

It belongs to the TUB family.

The protein resides in the cytoplasm. Its subcellular location is the nucleus. The protein localises to the cell projection. It is found in the cilium membrane. It localises to the rhabdomere. The polypeptide is Protein king tubby (Drosophila yakuba (Fruit fly)).